The sequence spans 198 residues: ATP synthase subunit b (198 aa).

A helical membrane pass occupies residues 25-45; sequence PLSELLIGTLAFGLLVAFFFW.

This sequence belongs to the ATPase B chain family. As to quaternary structure, F-type ATPases have 2 components, F(1) - the catalytic core - and F(0) - the membrane proton channel. F(1) has five subunits: alpha(3), beta(3), gamma(1), delta(1), epsilon(1). F(0) has three main subunits: a(1), b(2) and c(10-14). The alpha and beta chains form an alternating ring which encloses part of the gamma chain. F(1) is attached to F(0) by a central stalk formed by the gamma and epsilon chains, while a peripheral stalk is formed by the delta and b chains.

Its subcellular location is the cell membrane. F(1)F(0) ATP synthase produces ATP from ADP in the presence of a proton or sodium gradient. F-type ATPases consist of two structural domains, F(1) containing the extramembraneous catalytic core and F(0) containing the membrane proton channel, linked together by a central stalk and a peripheral stalk. During catalysis, ATP synthesis in the catalytic domain of F(1) is coupled via a rotary mechanism of the central stalk subunits to proton translocation. In terms of biological role, component of the F(0) channel, it forms part of the peripheral stalk, linking F(1) to F(0). In Frankia alni (strain DSM 45986 / CECT 9034 / ACN14a), this protein is ATP synthase subunit b.